The primary structure comprises 256 residues: Imidazole glycerol phosphate synthase subunit HisF (256 aa).

Residues Asp-12 and Asp-131 contribute to the active site.

Belongs to the HisA/HisF family. In terms of assembly, heterodimer of HisH and HisF.

It localises to the cytoplasm. It catalyses the reaction 5-[(5-phospho-1-deoxy-D-ribulos-1-ylimino)methylamino]-1-(5-phospho-beta-D-ribosyl)imidazole-4-carboxamide + L-glutamine = D-erythro-1-(imidazol-4-yl)glycerol 3-phosphate + 5-amino-1-(5-phospho-beta-D-ribosyl)imidazole-4-carboxamide + L-glutamate + H(+). It functions in the pathway amino-acid biosynthesis; L-histidine biosynthesis; L-histidine from 5-phospho-alpha-D-ribose 1-diphosphate: step 5/9. Its function is as follows. IGPS catalyzes the conversion of PRFAR and glutamine to IGP, AICAR and glutamate. The HisF subunit catalyzes the cyclization activity that produces IGP and AICAR from PRFAR using the ammonia provided by the HisH subunit. The protein is Imidazole glycerol phosphate synthase subunit HisF of Bifidobacterium longum (strain DJO10A).